A 272-amino-acid polypeptide reads, in one-letter code: Glutamate racemase (272 aa).

Residues aspartate 12–serine 13 and tyrosine 44–glycine 45 contribute to the substrate site. The active-site Proton donor/acceptor is the cysteine 75. Asparagine 76–threonine 77 lines the substrate pocket. Cysteine 185 functions as the Proton donor/acceptor in the catalytic mechanism. A substrate-binding site is contributed by threonine 186–histidine 187.

Belongs to the aspartate/glutamate racemases family.

The enzyme catalyses L-glutamate = D-glutamate. The protein operates within cell wall biogenesis; peptidoglycan biosynthesis. Functionally, provides the (R)-glutamate required for cell wall biosynthesis. The chain is Glutamate racemase from Mycobacterium leprae (strain TN).